Here is a 407-residue protein sequence, read N- to C-terminus: Phosphopentomutase (407 aa).

D10, D306, H311, D347, H348, and H359 together coordinate Mn(2+).

This sequence belongs to the phosphopentomutase family. The cofactor is Mn(2+).

Its subcellular location is the cytoplasm. The enzyme catalyses 2-deoxy-alpha-D-ribose 1-phosphate = 2-deoxy-D-ribose 5-phosphate. The catalysed reaction is alpha-D-ribose 1-phosphate = D-ribose 5-phosphate. It participates in carbohydrate degradation; 2-deoxy-D-ribose 1-phosphate degradation; D-glyceraldehyde 3-phosphate and acetaldehyde from 2-deoxy-alpha-D-ribose 1-phosphate: step 1/2. Isomerase that catalyzes the conversion of deoxy-ribose 1-phosphate (dRib-1-P) and ribose 1-phosphate (Rib-1-P) to deoxy-ribose 5-phosphate (dRib-5-P) and ribose 5-phosphate (Rib-5-P), respectively. The protein is Phosphopentomutase of Yersinia pestis bv. Antiqua (strain Angola).